The following is a 122-amino-acid chain: Large ribosomal subunit protein bL12 (122 aa).

It belongs to the bacterial ribosomal protein bL12 family. In terms of assembly, homodimer. Part of the ribosomal stalk of the 50S ribosomal subunit. Forms a multimeric L10(L12)X complex, where L10 forms an elongated spine to which 2 to 4 L12 dimers bind in a sequential fashion. Binds GTP-bound translation factors.

In terms of biological role, forms part of the ribosomal stalk which helps the ribosome interact with GTP-bound translation factors. Is thus essential for accurate translation. The protein is Large ribosomal subunit protein bL12 of Acinetobacter baumannii (strain AB0057).